The following is a 745-amino-acid chain: uncharacterized protein (745 aa).

The HTH araC/xylS-type domain occupies N158–D256. DNA-binding regions (H-T-H motif) lie at residues S175 to L196 and I223 to T246.

This is an uncharacterized protein from Staphylococcus aureus (strain Mu50 / ATCC 700699).